A 381-amino-acid chain; its full sequence is Acetylornithine deacetylase (381 aa).

His79 provides a ligand contact to Zn(2+). Residue Asp81 is part of the active site. Position 111 (Asp111) interacts with Zn(2+). The active site involves Glu143. Glu144, Glu168, and His354 together coordinate Zn(2+).

Belongs to the peptidase M20A family. ArgE subfamily. Homodimer. Zn(2+) serves as cofactor. Requires Co(2+) as cofactor. The cofactor is glutathione.

The protein localises to the cytoplasm. The catalysed reaction is N(2)-acetyl-L-ornithine + H2O = L-ornithine + acetate. Its pathway is amino-acid biosynthesis; L-arginine biosynthesis; L-ornithine from N(2)-acetyl-L-ornithine (linear): step 1/1. Catalyzes the hydrolysis of the amide bond of N(2)-acetylated L-amino acids. Cleaves the acetyl group from N-acetyl-L-ornithine to form L-ornithine, an intermediate in L-arginine biosynthesis pathway, and a branchpoint in the synthesis of polyamines. In Buchnera aphidicola subsp. Acyrthosiphon pisum (strain APS) (Acyrthosiphon pisum symbiotic bacterium), this protein is Acetylornithine deacetylase.